A 449-amino-acid polypeptide reads, in one-letter code: Chromosomal replication initiator protein DnaA (449 aa).

Residues 1 to 72 are domain I, interacts with DnaA modulators; it reads MPNLEELWAY…VEGVYEFAQL (72 aa). The domain II stretch occupies residues 72-109; that stretch reads LEVDPVIMTKDELQPAPATDQRPAVEEDDQNLTFKAKT. Positions 110-326 are domain III, AAA+ region; that stretch reads HLNPKYTFDR…GALVRVQAFS (217 aa). 4 residues coordinate ATP: glycine 154, glycine 156, lysine 157, and threonine 158. The domain IV, binds dsDNA stretch occupies residues 327 to 449; sequence TMKNEDITTS…ELRNILKNRG (123 aa).

Belongs to the DnaA family. In terms of assembly, oligomerizes as a right-handed, spiral filament on DNA at oriC.

It is found in the cytoplasm. Functionally, plays an essential role in the initiation and regulation of chromosomal replication. ATP-DnaA binds to the origin of replication (oriC) to initiate formation of the DNA replication initiation complex once per cell cycle. Binds the DnaA box (a 9 base pair repeat at the origin) and separates the double-stranded (ds)DNA. Forms a right-handed helical filament on oriC DNA; dsDNA binds to the exterior of the filament while single-stranded (ss)DNA is stabiized in the filament's interior. The ATP-DnaA-oriC complex binds and stabilizes one strand of the AT-rich DNA unwinding element (DUE), permitting loading of DNA polymerase. After initiation quickly degrades to an ADP-DnaA complex that is not apt for DNA replication. Binds acidic phospholipids. The sequence is that of Chromosomal replication initiator protein DnaA from Lacticaseibacillus casei (strain BL23) (Lactobacillus casei).